The sequence spans 314 residues: Mitochondrial RNA-splicing protein MRS3 (314 aa).

3 Solcar repeats span residues 31 to 118, 128 to 210, and 217 to 310; these read APLY…CKKN, HHPF…STKF, and YNPL…AKHF. 6 helical membrane-spanning segments follow: residues 33–52, 93–112, 130–149, 185–204, 219–238, and 285–298; these read LYHQ…SVMF, GVQS…FGTY, PFKT…ALMN, SYPT…FVIY, PLIH…AITT, and GWKP…PATA.

It belongs to the mitochondrial carrier (TC 2.A.29) family.

Its subcellular location is the mitochondrion inner membrane. MRS3 suppresses a mitochondrial splice defect in the first intron of the COB gene. It may act as a carrier, exerting its suppressor activity via modulation of solute concentrations in the mitochondrion (possibly of cations). In Saccharomyces cerevisiae (strain ATCC 204508 / S288c) (Baker's yeast), this protein is Mitochondrial RNA-splicing protein MRS3 (MRS3).